The sequence spans 180 residues: Large ribosomal subunit protein uL6 (180 aa).

It belongs to the universal ribosomal protein uL6 family. In terms of assembly, part of the 50S ribosomal subunit.

In terms of biological role, this protein binds to the 23S rRNA, and is important in its secondary structure. It is located near the subunit interface in the base of the L7/L12 stalk, and near the tRNA binding site of the peptidyltransferase center. This Dictyoglomus turgidum (strain DSM 6724 / Z-1310) protein is Large ribosomal subunit protein uL6.